The primary structure comprises 464 residues: Glutamate--tRNA ligase (464 aa).

Residues 9–19 (PSPTGYLHIGG) carry the 'HIGH' region motif. The 'KMSKS' region signature appears at 242-246 (KISKR). Lys245 is a binding site for ATP.

Belongs to the class-I aminoacyl-tRNA synthetase family. Glutamate--tRNA ligase type 1 subfamily. Monomer.

It is found in the cytoplasm. The catalysed reaction is tRNA(Glu) + L-glutamate + ATP = L-glutamyl-tRNA(Glu) + AMP + diphosphate. In terms of biological role, catalyzes the attachment of glutamate to tRNA(Glu) in a two-step reaction: glutamate is first activated by ATP to form Glu-AMP and then transferred to the acceptor end of tRNA(Glu). This is Glutamate--tRNA ligase from Neisseria meningitidis serogroup C (strain 053442).